A 367-amino-acid polypeptide reads, in one-letter code: Peptide chain release factor 1 (367 aa).

An N5-methylglutamine modification is found at Gln-243.

The protein belongs to the prokaryotic/mitochondrial release factor family. Methylated by PrmC. Methylation increases the termination efficiency of RF1.

It is found in the cytoplasm. Functionally, peptide chain release factor 1 directs the termination of translation in response to the peptide chain termination codons UAG and UAA. The polypeptide is Peptide chain release factor 1 (Acidovorax sp. (strain JS42)).